The sequence spans 353 residues: Methylthioribose-1-phosphate isomerase (353 aa).

Substrate contacts are provided by residues Arg51–Ala53, Arg94, and Gln199. Asp240 serves as the catalytic Proton donor. Asn250 to Lys251 contacts substrate.

Belongs to the eIF-2B alpha/beta/delta subunits family. MtnA subfamily. As to quaternary structure, homodimer.

The catalysed reaction is 5-(methylsulfanyl)-alpha-D-ribose 1-phosphate = 5-(methylsulfanyl)-D-ribulose 1-phosphate. Its pathway is amino-acid biosynthesis; L-methionine biosynthesis via salvage pathway; L-methionine from S-methyl-5-thio-alpha-D-ribose 1-phosphate: step 1/6. In terms of biological role, catalyzes the interconversion of methylthioribose-1-phosphate (MTR-1-P) into methylthioribulose-1-phosphate (MTRu-1-P). This Bacillus licheniformis (strain ATCC 14580 / DSM 13 / JCM 2505 / CCUG 7422 / NBRC 12200 / NCIMB 9375 / NCTC 10341 / NRRL NRS-1264 / Gibson 46) protein is Methylthioribose-1-phosphate isomerase.